The chain runs to 212 residues: Glycerol-3-phosphate acyltransferase (212 aa).

Helical transmembrane passes span Ile-3–Ser-23, Lys-51–Ala-71, Asp-78–Phe-98, Ala-115–Phe-135, and Ser-139–Thr-159.

Belongs to the PlsY family. In terms of assembly, probably interacts with PlsX.

The protein localises to the cell inner membrane. It catalyses the reaction an acyl phosphate + sn-glycerol 3-phosphate = a 1-acyl-sn-glycero-3-phosphate + phosphate. Its pathway is lipid metabolism; phospholipid metabolism. Catalyzes the transfer of an acyl group from acyl-phosphate (acyl-PO(4)) to glycerol-3-phosphate (G3P) to form lysophosphatidic acid (LPA). This enzyme utilizes acyl-phosphate as fatty acyl donor, but not acyl-CoA or acyl-ACP. The chain is Glycerol-3-phosphate acyltransferase from Burkholderia multivorans (strain ATCC 17616 / 249).